Here is a 391-residue protein sequence, read N- to C-terminus: NADH-quinone oxidoreductase subunit D (391 aa).

The protein belongs to the complex I 49 kDa subunit family. As to quaternary structure, NDH-1 is composed of 14 different subunits. Subunits NuoB, C, D, E, F, and G constitute the peripheral sector of the complex.

Its subcellular location is the cell inner membrane. It catalyses the reaction a quinone + NADH + 5 H(+)(in) = a quinol + NAD(+) + 4 H(+)(out). NDH-1 shuttles electrons from NADH, via FMN and iron-sulfur (Fe-S) centers, to quinones in the respiratory chain. The immediate electron acceptor for the enzyme in this species is believed to be ubiquinone. Couples the redox reaction to proton translocation (for every two electrons transferred, four hydrogen ions are translocated across the cytoplasmic membrane), and thus conserves the redox energy in a proton gradient. The chain is NADH-quinone oxidoreductase subunit D from Rickettsia felis (strain ATCC VR-1525 / URRWXCal2) (Rickettsia azadi).